We begin with the raw amino-acid sequence, 505 residues long: Beta-glucosidase 18 (505 aa).

Positions 1–26 are cleaved as a signal peptide; the sequence is MAGGSKTRIHASLVSTLLLLLPLASA. An a beta-D-glucoside-binding site is contributed by Q46. N55 carries an N-linked (GlcNAc...) asparagine glycan. Residues H148 and 193–194 each bind a beta-D-glucoside; that span reads NE. E194 (proton donor) is an active-site residue. A disulfide bridge connects residues C213 and C220. Y337 lines the a beta-D-glucoside pocket. An intrachain disulfide couples C345 to C350. A beta-D-glucoside contacts are provided by residues E408, W457, 464-465, and F473; that span reads EW. E408 acts as the Nucleophile in catalysis.

This sequence belongs to the glycosyl hydrolase 1 family. In terms of tissue distribution, expressed in roots, leaves, flowers and pollen.

It catalyses the reaction Hydrolysis of terminal, non-reducing beta-D-glucosyl residues with release of beta-D-glucose.. In terms of biological role, hydrolyzes glycosides and monolignol glucosides. Can hydrolyze para-nitrophenyl beta-D-glucopyranoside (pNPGlc) in vitro. Hydrolyzes para-nitrophenyl beta-D-fucopyranoside, para-nitrophenyl beta-D-galactopyranoside and para-nitrophenyl beta-D-xylopyranoside in vitro. Hydrolyzes the monolignol glucosides coniferin and syringin with high catalytic efficiencies. In Oryza sativa subsp. japonica (Rice), this protein is Beta-glucosidase 18.